We begin with the raw amino-acid sequence, 132 residues long: DNA-directed RNA polymerase subunit omega (132 aa).

This sequence belongs to the RNA polymerase subunit omega family. In terms of assembly, the RNAP catalytic core consists of 2 alpha, 1 beta, 1 beta' and 1 omega subunit. When a sigma factor is associated with the core the holoenzyme is formed, which can initiate transcription.

The catalysed reaction is RNA(n) + a ribonucleoside 5'-triphosphate = RNA(n+1) + diphosphate. Promotes RNA polymerase assembly. Latches the N- and C-terminal regions of the beta' subunit thereby facilitating its interaction with the beta and alpha subunits. The protein is DNA-directed RNA polymerase subunit omega of Bartonella bacilliformis (strain ATCC 35685 / KC583 / Herrer 020/F12,63).